The sequence spans 257 residues: Imidazole glycerol phosphate synthase subunit HisF (257 aa).

Catalysis depends on residues Asp11 and Asp130.

It belongs to the HisA/HisF family. As to quaternary structure, heterodimer of HisH and HisF.

It localises to the cytoplasm. The enzyme catalyses 5-[(5-phospho-1-deoxy-D-ribulos-1-ylimino)methylamino]-1-(5-phospho-beta-D-ribosyl)imidazole-4-carboxamide + L-glutamine = D-erythro-1-(imidazol-4-yl)glycerol 3-phosphate + 5-amino-1-(5-phospho-beta-D-ribosyl)imidazole-4-carboxamide + L-glutamate + H(+). It functions in the pathway amino-acid biosynthesis; L-histidine biosynthesis; L-histidine from 5-phospho-alpha-D-ribose 1-diphosphate: step 5/9. IGPS catalyzes the conversion of PRFAR and glutamine to IGP, AICAR and glutamate. The HisF subunit catalyzes the cyclization activity that produces IGP and AICAR from PRFAR using the ammonia provided by the HisH subunit. This chain is Imidazole glycerol phosphate synthase subunit HisF, found in Shewanella sp. (strain MR-4).